The following is a 347-amino-acid chain: Dual specificity mitogen-activated protein kinase kinase 3 (347 aa).

M1 carries the N-acetylmethionine modification. Over residues M1–S11 the composition is skewed to pro residues. The interval M1–D45 is disordered. S3 is subject to Phosphoserine. Positions L64–F325 constitute a Protein kinase domain. ATP-binding positions include L70–V78 and K93. D190 functions as the Proton acceptor in the catalytic mechanism. S218 bears the Phosphoserine mark. The residue at position 222 (T222) is a Phosphothreonine.

Belongs to the protein kinase superfamily. STE Ser/Thr protein kinase family. MAP kinase kinase subfamily. Component of a signaling complex containing at least AKAP13, PKN1, MAPK14, ZAK and MAP2K3. Within this complex, AKAP13 interacts directly with PKN1, which in turn recruits MAPK14, MAP2K3 and ZAK. Binds to DYRK1B/MIRK and increases its kinase activity. Part of a complex with MAP3K3, RAC1 and CCM2. Interacts with ARRB1. In terms of processing, autophosphorylated. Phosphorylation on Ser-218 and Thr-222 by MAP kinase kinase kinases positively regulates the kinase activity. Phosphorylated by TAOK2.

It carries out the reaction L-seryl-[protein] + ATP = O-phospho-L-seryl-[protein] + ADP + H(+). The enzyme catalyses L-threonyl-[protein] + ATP = O-phospho-L-threonyl-[protein] + ADP + H(+). It catalyses the reaction L-tyrosyl-[protein] + ATP = O-phospho-L-tyrosyl-[protein] + ADP + H(+). Its activity is regulated as follows. Activated by dual phosphorylation on Ser-218 and Thr-222. Functionally, dual specificity kinase. Is activated by cytokines and environmental stress in vivo. Catalyzes the concomitant phosphorylation of a threonine and a tyrosine residue in the MAP kinase p38. Part of a signaling cascade that begins with the activation of the adrenergic receptor ADRA1B and leads to the activation of MAPK14. This chain is Dual specificity mitogen-activated protein kinase kinase 3 (Map2k3), found in Mus musculus (Mouse).